The following is a 657-amino-acid chain: THO complex subunit 1 (657 aa).

Met-1 bears the N-acetylmethionine mark. Ser-2 is subject to Phosphoserine. Thr-4 carries the phosphothreonine modification. Lys-31 participates in a covalent cross-link: Glycyl lysine isopeptide (Lys-Gly) (interchain with G-Cter in SUMO2). An N6-acetyllysine modification is found at Lys-133. The segment at 133-167 (KNYLLRMCNDLLRRLSKSQNTVFCGRIQLFLARLF) is dock domain; interaction with THOC2. The segment at 194 to 221 (QESTLGQKHTEDREEGMDVEEGEMGDDE) is disordered. Residues 206 to 221 (REEGMDVEEGEMGDDE) show a composition bias toward acidic residues. Residues 227–397 (SIPIDYNLYR…WNSWKNEGCP (171 aa)) form a dock domain; interaction with THOC2 region. An N6-acetyllysine modification is found at Lys-300. A Glycyl lysine isopeptide (Lys-Gly) (interchain with G-Cter in SUMO2) cross-link involves residue Lys-408. The Nuclear localization signal motif lies at 414-430 (RKRAAPEDFLGKGPNKK). The segment at 533–569 (LPPPSEEIKTGEDEDEEDNDALLKENESPDVRRDKPI) is disordered. Ser-537 carries the phosphoserine modification. At Thr-542 the chain carries Phosphothreonine. Residues 553–569 (ALLKENESPDVRRDKPI) are compositionally biased toward basic and acidic residues. Residue Ser-560 is modified to Phosphoserine. The Death domain maps to 570 to 653 (TGEQIESFAN…DLAESLTNDT (84 aa)). A Glycyl lysine isopeptide (Lys-Gly) (interchain with G-Cter in SUMO2) cross-link involves residue Lys-580. Lys-595 participates in a covalent cross-link: Glycyl lysine isopeptide (Lys-Gly) (interchain with G-Cter in SUMO1); alternate. A Glycyl lysine isopeptide (Lys-Gly) (interchain with G-Cter in SUMO2); alternate cross-link involves residue Lys-595.

It belongs to the THOC1 family. As to quaternary structure, component of the THO subcomplex, which is composed of THOC1, THOC2, THOC3, THOC5, THOC6 and THOC7. The THO subcomplex interacts with DDX39B to form the THO-DDX39B complex which multimerizes into a 28-subunit tetrameric assembly. Component of the transcription/export (TREX) complex at least composed of ALYREF/THOC4, DDX39B, SARNP/CIP29, CHTOP and the THO subcomplex; in the complex interacts with THOC2, THOC5 and THOC7. TREX seems to have a dynamic structure involving ATP-dependent remodeling. Binds to the hypophosphorylated form of RB1. Interacts with RNA polymerase II. Interacts with LUZP4. Interacts with THOC5. Expression is altered specifically during apoptosis and is accompanied by the appearance of novel forms with smaller apparent molecular mass. Post-translationally, polyubiquitinated, leading to proteasomal degradation; probably involves NEDD4. As to expression, in the inner ear, specifically expressed in inner and outer hair cells (at protein level).

Its subcellular location is the nucleus. It localises to the nucleoplasm. It is found in the nucleus matrix. The protein localises to the cytoplasm. The protein resides in the cytosol. Functionally, component of the THO subcomplex of the TREX complex which is thought to couple mRNA transcription, processing and nuclear export, and which specifically associates with spliced mRNA and not with unspliced pre-mRNA. Required for efficient export of polyadenylated RNA. The THOC1-THOC2-THOC3 core complex alone is sufficient to bind export factor NXF1-NXT1 and promote ATPase activity of DDX39B. TREX is recruited to spliced mRNAs by a transcription-independent mechanism, binds to mRNA upstream of the exon-junction complex (EJC) and is recruited in a splicing- and cap-dependent manner to a region near the 5' end of the mRNA where it functions in mRNA export to the cytoplasm via the TAP/NXF1 pathway. Regulates transcriptional elongation of a subset of genes. Involved in genome stability by preventing co-transcriptional R-loop formation. May play a role in hair cell formation, hence may be involved in hearing. Participates in an apoptotic pathway which is characterized by activation of caspase-6, increases in the expression of BAK1 and BCL2L1 and activation of NF-kappa-B. This pathway does not require p53/TP53, nor does the presence of p53/TP53 affect the efficiency of cell killing. Activates a G2/M cell cycle checkpoint prior to the onset of apoptosis. Apoptosis is inhibited by association with RB1. Essential for early embryonic development. Required for normal gene expression during postnatal testis development. The sequence is that of THO complex subunit 1 (Thoc1) from Mus musculus (Mouse).